We begin with the raw amino-acid sequence, 38 residues long: Large ribosomal subunit protein bL36 (38 aa).

Belongs to the bacterial ribosomal protein bL36 family.

The sequence is that of Large ribosomal subunit protein bL36 from Enterococcus faecalis (strain ATCC 700802 / V583).